A 224-amino-acid polypeptide reads, in one-letter code: UPF0758 protein PLES_57141 (224 aa).

The MPN domain occupies Ile102–Leu224. Residues His173, His175, and Asp186 each coordinate Zn(2+). The short motif at His173 to Asp186 is the JAMM motif element.

The protein belongs to the UPF0758 family.

This is UPF0758 protein PLES_57141 from Pseudomonas aeruginosa (strain LESB58).